The following is a 93-amino-acid chain: Putative regulatory protein Clos_1422 (93 aa).

This sequence belongs to the RemA family.

The polypeptide is Putative regulatory protein Clos_1422 (Alkaliphilus oremlandii (strain OhILAs) (Clostridium oremlandii (strain OhILAs))).